We begin with the raw amino-acid sequence, 1420 residues long: Apolipoprotein(a) (1420 aa).

The span at 19 to 30 shows a compositional bias: low complexity; that stretch reads TAVAPPNVTPVP. The disordered stretch occupies residues 19–46; that stretch reads TAVAPPNVTPVPSLEAPSEQAPTEQRPG. 5 consecutive Kringle domains span residues 49 to 127, 163 to 241, 277 to 355, 391 to 469, and 505 to 583; these read ECYH…LTQC, ECYH…LTRC, and ECYY…LTQC. Cystine bridges form between Cys50-Cys127, Cys71-Cys110, Cys99-Cys122, Cys164-Cys241, Cys185-Cys224, Cys213-Cys236, Cys278-Cys355, Cys299-Cys338, Cys327-Cys350, Cys392-Cys469, Cys413-Cys452, Cys441-Cys464, Cys506-Cys583, Cys527-Cys566, and Cys555-Cys578. The interval 598–617 is disordered; sequence PDPSTQASSEEAPTEQSPEV. The span at 600–616 shows a compositional bias: polar residues; sequence PSTQASSEEAPTEQSPE. Kringle domains lie at 619–697, 725–803, 839–917, 953–1031, and 1067–1145; these read DCYH…LTQC, DCYQ…LTQC, and QCYH…LTRC. Disulfide bonds link Cys620–Cys697, Cys641–Cys680, Cys669–Cys692, Cys726–Cys803, Cys747–Cys786, Cys775–Cys798, Cys840–Cys917, Cys861–Cys900, Cys889–Cys912, Cys954–Cys1031, Cys975–Cys1014, Cys1003–Cys1026, Cys1068–Cys1145, Cys1089–Cys1128, Cys1117–Cys1140, Cys1217–Cys1233, Cys1309–Cys1376, Cys1339–Cys1355, and Cys1366–Cys1394. A Peptidase S1 domain is found at 1191–1418; sequence IVGGCVAHPH…FVTWIEGVMR (228 aa).

The protein belongs to the peptidase S1 family. Plasminogen subfamily. Disulfide-linked to apo-B100. Binds to fibronectin and decorin. In terms of processing, N- and O-glycosylated.

Its function is as follows. Apo(a) is the main constituent of lipoprotein(a) (Lp(a)). It has serine proteinase activity and is able of autoproteolysis. Inhibits tissue-type plasminogen activator 1. Lp(a) may be a ligand for megalin/Gp 330. In Macaca mulatta (Rhesus macaque), this protein is Apolipoprotein(a) (LPA).